The following is a 79-amino-acid chain: Protein SNA2 (79 aa).

Over 1–6 the chain is Cytoplasmic; the sequence is MHARDW. Residues 7-27 form a helical membrane-spanning segment; it reads FLVFIAIFIPPLAVWLKRGFF. Residues 28–32 are Vesicular-facing; it reads TKDLL. The helical transmembrane segment at 33–53 threads the bilayer; the sequence is INFLLFLLGFFPGLIHALYVI. Topologically, residues 54–79 are cytoplasmic; it reads SCHPYEENEARYSHLSSSDDNYGSLA. 2 positions are modified to phosphoserine: Ser71 and Ser77.

This sequence belongs to the UPF0057 (PMP3) family.

The protein localises to the membrane. It localises to the lipid droplet. This chain is Protein SNA2 (SNA2), found in Saccharomyces cerevisiae (strain ATCC 204508 / S288c) (Baker's yeast).